A 343-amino-acid chain; its full sequence is DNA-directed RNA polymerase subunit alpha (343 aa).

Positions 1–239 (MGETVTIQKN…DQLNVFVNFE (239 aa)) are alpha N-terminal domain (alpha-NTD). The alpha C-terminal domain (alpha-CTD) stretch occupies residues 255–343 (FNPAFLKKVD…ELAKRFEDHY (89 aa)).

Belongs to the RNA polymerase alpha chain family. In terms of assembly, homodimer. The RNAP catalytic core consists of 2 alpha, 1 beta, 1 beta' and 1 omega subunit. When a sigma factor is associated with the core the holoenzyme is formed, which can initiate transcription.

It catalyses the reaction RNA(n) + a ribonucleoside 5'-triphosphate = RNA(n+1) + diphosphate. DNA-dependent RNA polymerase catalyzes the transcription of DNA into RNA using the four ribonucleoside triphosphates as substrates. The sequence is that of DNA-directed RNA polymerase subunit alpha from Bradyrhizobium sp. (strain BTAi1 / ATCC BAA-1182).